We begin with the raw amino-acid sequence, 289 residues long: MNMLEKIQSQLEHLSKSERKVAEVILASPDNAIHSSIAAMALEANVSEPTVNRFCRSMDTRGFPDFKLHLAQSLANGTPYVNRNVNEDDSVESYTGKIFESAMATLDHVRHSLDKSAINRAVDLLTQAKKIAFFGLGSSAAVAHDAMNKFFRFNVPVVYSDDIVLQRMSCMNCSDGDVVVLISHTGRTKNLVELAQLARENDAMVIALTSAGTPLAREATLAITLDVPEDTDIYMPMVSRLAQLTVIDVLATGFTLRRGAKFRDNLKRVKEALKESRFDKQLLNLSDDR.

One can recognise an HTH rpiR-type domain in the interval Met1 to Gly77. The segment at residues Ile37–Arg56 is a DNA-binding region (H-T-H motif). The 140-residue stretch at Ala121–Ala260 folds into the SIS domain.

Represses the expression of the hex regulon (zwf, eda, glp and gap). The polypeptide is HTH-type transcriptional regulator HexR (hexR) (Escherichia coli (strain K12)).